Consider the following 187-residue polypeptide: Putative adenylate kinase (187 aa).

Positions 10, 12, 13, 14, and 15 each coordinate ATP. The segment at 30–53 (SLSQFVIENKLYTEYDELRQSYII) is NMP. Positions 103 to 113 (GRGWADIKVAE) are LID. Arginine 104 contributes to the ATP binding site.

It belongs to the adenylate kinase family. AK6 subfamily. In terms of assembly, interacts with uS11. Not a structural component of 40S pre-ribosomes, but transiently interacts with them by binding to uS11.

The catalysed reaction is AMP + ATP = 2 ADP. It carries out the reaction ATP + H2O = ADP + phosphate + H(+). Functionally, broad-specificity nucleoside monophosphate (NMP) kinase that catalyzes the reversible transfer of the terminal phosphate group between nucleoside triphosphates and monophosphates. Also has ATPase activity. Involved in the late maturation steps of the 30S ribosomal particles, specifically 16S rRNA maturation. While NMP activity is not required for ribosome maturation, ATPase activity is. Associates transiently with small ribosomal subunit protein uS11. ATP hydrolysis breaks the interaction with uS11. May temporarily remove uS11 from the ribosome to enable a conformational change of the ribosomal RNA that is needed for the final maturation step of the small ribosomal subunit. The protein is Putative adenylate kinase of Saccharolobus islandicus (strain M.16.4 / Kamchatka #3) (Sulfolobus islandicus).